The sequence spans 3023 residues: Genome polyprotein (3023 aa).

The 143-residue stretch at 132–274 (TCSSSGLDNL…QSITLRATHF (143 aa)) folds into the Peptidase S30 domain. Catalysis depends on for P1 proteinase activity residues His183, Asp192, and Ser225. Residues 325-328 (KITC) carry the Involved in interaction with stylet and aphid transmission motif. The Involved in virions binding and aphid transmission signature appears at 583–585 (PTK). Residues 609–731 (MYIAKEGYCY…ESPMAQYKVG (123 aa)) form the Peptidase C6 domain. Residues Cys617 and His690 each act as for helper component proteinase activity in the active site. Residues 1202–1354 (QIAHNEHKDI…TQYPVELLIE (153 aa)) form the Helicase ATP-binding domain. 1215–1222 (GAVGSGKS) is an ATP binding site. The DEFH box motif lies at 1304 to 1307 (DEFH). Positions 1367–1532 (GTDAHADVVK…GLPVTTQNVS (166 aa)) constitute a Helicase C-terminal domain. Residues 1796–1800 (GIGLG) carry the GxxxG motif motif. Positions 1856–1863 (KKGKSKGK) match the Nuclear localization signal motif. O-(5'-phospho-RNA)-tyrosine is present on Tyr1878. Position 1878 is an O-UMP-tyrosine; transient (Tyr1878). One can recognise a Peptidase C4 domain in the interval 2002–2218 (SKALLKGVRD…ISWGSFTLVE (217 aa)). Active-site for nuclear inclusion protein A activity residues include His2047, Asp2082, and Cys2152. The RdRp catalytic domain occupies 2484–2608 (WVYCDADGSQ…AISPELEHVL (125 aa)). Thr3006 carries the phosphothreonine modification.

Belongs to the potyviridae genome polyprotein family. In terms of assembly, interacts with host eIF4E protein (via cap-binding region); this interaction mediates the translation of the VPg-viral RNA conjugates. Part of a complex that comprises VPg, RNA, host EIF4E and EIF4G; this interaction mediates the translation of the VPg-viral RNA conjugates. Post-translationally, VPg is uridylylated by the polymerase and is covalently attached to the 5'-end of the genomic RNA. This uridylylated form acts as a nucleotide-peptide primer for the polymerase. In terms of processing, potyviral RNA is expressed as two polyproteins which undergo post-translational proteolytic processing. Genome polyprotein is processed by NIa-pro, P1 and HC-pro proteinases resulting in the production of at least ten individual proteins. P3N-PIPO polyprotein is cleaved by P1 and HC-pro proteinases resulting in the production of three individual proteins. The P1 proteinase and the HC-pro cleave only their respective C-termini autocatalytically. 6K1 is essential for proper proteolytic separation of P3 from CI.

The protein localises to the host cytoplasmic vesicle. It is found in the host nucleus. The protein resides in the virion. It catalyses the reaction RNA(n) + a ribonucleoside 5'-triphosphate = RNA(n+1) + diphosphate. The enzyme catalyses Hydrolyzes glutaminyl bonds, and activity is further restricted by preferences for the amino acids in P6 - P1' that vary with the species of potyvirus, e.g. Glu-Xaa-Xaa-Tyr-Xaa-Gln-|-(Ser or Gly) for the enzyme from tobacco etch virus. The natural substrate is the viral polyprotein, but other proteins and oligopeptides containing the appropriate consensus sequence are also cleaved.. The catalysed reaction is Hydrolyzes a Gly-|-Gly bond at its own C-terminus, commonly in the sequence -Tyr-Xaa-Val-Gly-|-Gly, in the processing of the potyviral polyprotein.. Its function is as follows. Required for aphid transmission and also has proteolytic activity. Only cleaves a Gly-Gly dipeptide at its own C-terminus. Interacts with virions and aphid stylets. Acts as a suppressor of RNA-mediated gene silencing, also known as post-transcriptional gene silencing (PTGS), a mechanism of plant viral defense that limits the accumulation of viral RNAs. May have RNA-binding activity. Has helicase activity. It may be involved in replication. Functionally, indispensable for virus replication. Reduces the abundance of host transcripts related to jasmonic acid biosynthesis therefore altering the host defenses. In order to increase its own stability, decreases host protein degradation pathways. In terms of biological role, indispensable for virus replication. Its function is as follows. Mediates the cap-independent, EIF4E-dependent translation of viral genomic RNAs. Binds to the cap-binding site of host EIF4E and thus interferes with the host EIF4E-dependent mRNA export and translation. VPg-RNA directly binds EIF4E and is a template for transcription. Also forms trimeric complexes with EIF4E-EIF4G, which are templates for translation. Has RNA-binding and proteolytic activities. Main protease that processes most of the polyprotein cleavages. Functionally, an RNA-dependent RNA polymerase that plays an essential role in the virus replication. In terms of biological role, involved in aphid transmission, cell-to-cell and systemis movement, encapsidation of the viral RNA and in the regulation of viral RNA amplification. In Tobacco vein mottling virus (TVMV), this protein is Genome polyprotein.